Here is a 179-residue protein sequence, read N- to C-terminus: Large ribosomal subunit protein uL5 (179 aa).

The protein belongs to the universal ribosomal protein uL5 family. Part of the 50S ribosomal subunit; part of the 5S rRNA/L5/L18/L25 subcomplex. Contacts the 5S rRNA and the P site tRNA. Forms a bridge to the 30S subunit in the 70S ribosome.

In terms of biological role, this is one of the proteins that bind and probably mediate the attachment of the 5S RNA into the large ribosomal subunit, where it forms part of the central protuberance. In the 70S ribosome it contacts protein S13 of the 30S subunit (bridge B1b), connecting the 2 subunits; this bridge is implicated in subunit movement. Contacts the P site tRNA; the 5S rRNA and some of its associated proteins might help stabilize positioning of ribosome-bound tRNAs. The polypeptide is Large ribosomal subunit protein uL5 (Dechloromonas aromatica (strain RCB)).